Consider the following 308-residue polypeptide: Uricase-2 isozyme 1 (308 aa).

Catalysis depends on charge relay system residues Lys17 and Thr63. Residues Thr63, Asp64, Phe165, Arg182, Val237, Gln238, and Asn264 each contribute to the urate site. Catalysis depends on His266, which acts as the Charge relay system. The Microbody targeting signal motif lies at 306 to 308 (SKL).

The protein belongs to the uricase family.

The protein resides in the peroxisome. The catalysed reaction is urate + O2 + H2O = 5-hydroxyisourate + H2O2. The protein operates within purine metabolism; urate degradation; (S)-allantoin from urate: step 1/3. In terms of biological role, catalyzes the oxidation of uric acid to 5-hydroxyisourate, which is further processed to form (S)-allantoin. This Canavalia lineata (Beach bean) protein is Uricase-2 isozyme 1.